A 602-amino-acid polypeptide reads, in one-letter code: Elongation factor 4 (602 aa).

The region spanning 7 to 189 (KHIRNFSIVA…AIVDKIPSPQ (183 aa)) is the tr-type G domain. GTP is bound by residues 19–24 (DHGKST) and 136–139 (NKID).

This sequence belongs to the TRAFAC class translation factor GTPase superfamily. Classic translation factor GTPase family. LepA subfamily.

It localises to the cell membrane. The catalysed reaction is GTP + H2O = GDP + phosphate + H(+). Functionally, required for accurate and efficient protein synthesis under certain stress conditions. May act as a fidelity factor of the translation reaction, by catalyzing a one-codon backward translocation of tRNAs on improperly translocated ribosomes. Back-translocation proceeds from a post-translocation (POST) complex to a pre-translocation (PRE) complex, thus giving elongation factor G a second chance to translocate the tRNAs correctly. Binds to ribosomes in a GTP-dependent manner. The polypeptide is Elongation factor 4 (Clostridium kluyveri (strain ATCC 8527 / DSM 555 / NBRC 12016 / NCIMB 10680 / K1)).